The primary structure comprises 1309 residues: Phospholipase A I (1309 aa).

LRR repeat units follow at residues 155 to 178 (LPLLEKLCLEHNKLSVLPPEIGKL), 180 to 201 (NLKILRVDNNMLISVPVELRQC), 203 to 223 (GLVELSLEHNKLVRPLLDFRA), and 224 to 248 (MAGLRILRLFGNPLEFLPEILPLHQ). ARM repeat units lie at residues 315–356 (DEGN…SLAR), 401–439 (SVSQKMLTKDMLKALKSLCAHKNPEVQRQALLAVGNLAF), and 440–481 (CLEN…ILGE). Residues 502 to 746 (LTMDGGGMKG…VANNPTIFAI (245 aa)) enclose the PNPLA domain. A GXGXXG motif is present at residues 506–511 (GGGMKG). The GXSXG motif lies at 538 to 542 (GTSTG). The active-site Nucleophile is the S540. The active-site Proton acceptor is the D733. A DGA/G motif is present at residues 733-735 (DGA). The segment at 1183 to 1253 (VIGPSNEPQE…EDSDHEKTNR (71 aa)) is disordered. Residues 1188 to 1208 (NEPQETPLITSQGSSEYNIGD) show a composition bias toward polar residues. The span at 1216–1235 (GEEEDEDEEVNEETEREEME) shows a compositional bias: acidic residues.

The protein belongs to the patatin family.

The protein resides in the plastid. Its subcellular location is the chloroplast. Possesses non-specific lipolytic acyl hydrolase (LAH) activity. Catalyzes the hydrolysis of the galactolipids monogalactosyldiacylglycerol (MGDG) and digalactosyldiacylglycerol (DGDG), and less efficiently the phoshpolipids phosphatidylcholine (PC), phosphatidylethanolamine (PE), phosphatidylglycerol (PG), phosphatidylserine (PS) and phosphatidylinositol (PI). Hydrolyzes phospholipids at both the sn-1 and sn-2 positions. Involved in basal jasmonic acid production and promotes resistance to the necrotrophic fungal pathogen Botrytis cinerea. The sequence is that of Phospholipase A I (PLA1) from Arabidopsis thaliana (Mouse-ear cress).